The sequence spans 448 residues: Phosphoglucosamine mutase (448 aa).

The active-site Phosphoserine intermediate is Ser102. Mg(2+) is bound by residues Ser102, Asp243, Asp245, and Asp247. At Ser102 the chain carries Phosphoserine.

It belongs to the phosphohexose mutase family. Mg(2+) is required as a cofactor. In terms of processing, activated by phosphorylation.

It catalyses the reaction alpha-D-glucosamine 1-phosphate = D-glucosamine 6-phosphate. Catalyzes the conversion of glucosamine-6-phosphate to glucosamine-1-phosphate. This chain is Phosphoglucosamine mutase, found in Parvibaculum lavamentivorans (strain DS-1 / DSM 13023 / NCIMB 13966).